A 624-amino-acid polypeptide reads, in one-letter code: Probable Xaa-Pro aminopeptidase P (624 aa).

Mn(2+)-binding residues include Asp421, Asp432, Glu530, and Glu544.

This sequence belongs to the peptidase M24B family. Mn(2+) serves as cofactor.

The enzyme catalyses Release of any N-terminal amino acid, including proline, that is linked to proline, even from a dipeptide or tripeptide.. Its function is as follows. Catalyzes the removal of a penultimate prolyl residue from the N-termini of peptides. This chain is Probable Xaa-Pro aminopeptidase P (AMPP), found in Arthroderma otae (strain ATCC MYA-4605 / CBS 113480) (Microsporum canis).